The chain runs to 430 residues: Histidinol dehydrogenase (430 aa).

Residues S237, Q259, and H262 each coordinate substrate. 2 residues coordinate Zn(2+): Q259 and H262. Residues E327 and H328 each act as proton acceptor in the active site. Substrate contacts are provided by H328, D361, E415, and H420. D361 is a Zn(2+) binding site. Residue H420 participates in Zn(2+) binding.

Belongs to the histidinol dehydrogenase family. It depends on Zn(2+) as a cofactor.

It carries out the reaction L-histidinol + 2 NAD(+) + H2O = L-histidine + 2 NADH + 3 H(+). It participates in amino-acid biosynthesis; L-histidine biosynthesis; L-histidine from 5-phospho-alpha-D-ribose 1-diphosphate: step 9/9. Functionally, catalyzes the sequential NAD-dependent oxidations of L-histidinol to L-histidinaldehyde and then to L-histidine. In Mesorhizobium japonicum (strain LMG 29417 / CECT 9101 / MAFF 303099) (Mesorhizobium loti (strain MAFF 303099)), this protein is Histidinol dehydrogenase.